The sequence spans 831 residues: DNA ligase (831 aa).

NAD(+)-binding positions include 34 to 38 (DADYD), 83 to 84 (SL), and E114. K116 (N6-AMP-lysine intermediate) is an active-site residue. R137, E174, K291, and K315 together coordinate NAD(+). Positions 409, 412, 427, and 433 each coordinate Zn(2+). A BRCT domain is found at 749 to 831 (AHTAPLNGQS…LDFLEQYSAQ (83 aa)).

Belongs to the NAD-dependent DNA ligase family. LigA subfamily. The cofactor is Mg(2+). Mn(2+) is required as a cofactor.

It catalyses the reaction NAD(+) + (deoxyribonucleotide)n-3'-hydroxyl + 5'-phospho-(deoxyribonucleotide)m = (deoxyribonucleotide)n+m + AMP + beta-nicotinamide D-nucleotide.. In terms of biological role, DNA ligase that catalyzes the formation of phosphodiester linkages between 5'-phosphoryl and 3'-hydroxyl groups in double-stranded DNA using NAD as a coenzyme and as the energy source for the reaction. It is essential for DNA replication and repair of damaged DNA. This is DNA ligase from Xylella fastidiosa (strain M12).